Reading from the N-terminus, the 72-residue chain is Exodeoxyribonuclease 7 small subunit (72 aa).

This sequence belongs to the XseB family. In terms of assembly, heterooligomer composed of large and small subunits.

Its subcellular location is the cytoplasm. It catalyses the reaction Exonucleolytic cleavage in either 5'- to 3'- or 3'- to 5'-direction to yield nucleoside 5'-phosphates.. Bidirectionally degrades single-stranded DNA into large acid-insoluble oligonucleotides, which are then degraded further into small acid-soluble oligonucleotides. In Chlamydia trachomatis serovar L2 (strain ATCC VR-902B / DSM 19102 / 434/Bu), this protein is Exodeoxyribonuclease 7 small subunit.